Reading from the N-terminus, the 400-residue chain is CinA-like protein (400 aa).

The protein belongs to the CinA family.

The polypeptide is CinA-like protein (Escherichia coli (strain SE11)).